The sequence spans 514 residues: Maltose/maltodextrin transport system permease protein MalF (514 aa).

Over 1 to 16 (MDVIKKKHWWQSDALK) the chain is Cytoplasmic. A helical transmembrane segment spans residues 17 to 36 (WSVLGLLGLLVGYLVVLMYA). Residues 37 to 39 (QGE) are Periplasmic-facing. Residues 40–58 (YLFAITTLILSSAGLYIFA) form a helical membrane-spanning segment. Residues 59–66 (NRKAYAWR) lie on the Cytoplasmic side of the membrane. Residues 67–92 (YVYPGMAGMGLFVLFPLVCTIAIAFT) form a helical membrane-spanning segment. Residues 93–275 (NYSSTNQLTF…RVFTDEGIQK (183 aa)) lie on the Periplasmic side of the membrane. A helical transmembrane segment spans residues 276–306 (PFLAIFVWTVVFSLITVFLTVAVGMVLACLV). The ABC transmembrane type-1 domain maps to 281 to 505 (FVWTVVFSLI…LLVGALAIVN (225 aa)). Topologically, residues 307-318 (QWEALRGKAVYR) are cytoplasmic. A helical transmembrane segment spans residues 319–336 (VLLILPYAVPSFISILIF). Residues 337 to 369 (KGLFNQSFGEINMMLSALFGVKPAWFSDPTTAR) are Periplasmic-facing. The helical transmembrane segment at 370–392 (TMLIIVNTWLGYPYMMILCMGLL) threads the bilayer. The Cytoplasmic segment spans residues 393 to 425 (KAIPDDLYEASAMDGAGPFQNFFKITLPLLIKP). The helical transmembrane segment at 426 to 452 (LTPLMIASFAFNFNNFVLIQLLTNGGP) threads the bilayer. Residues 453–483 (DRLGTTTPAGYTDLLVNYTYRIAFEGGGGQD) lie on the Periplasmic side of the membrane. A helical membrane pass occupies residues 484–505 (FGLAAAIATLIFLLVGALAIVN). Over 506–514 (LKATRMKFD) the chain is Cytoplasmic.

Belongs to the binding-protein-dependent transport system permease family. MalFG subfamily. As to quaternary structure, the complex is composed of two ATP-binding proteins (MalK), two transmembrane proteins (MalG and MalF) and a solute-binding protein (MalE). Protein stability and stable complex formation require YidC.

Its subcellular location is the cell inner membrane. Its function is as follows. Part of the ABC transporter complex MalEFGK involved in maltose/maltodextrin import. Probably responsible for the translocation of the substrate across the membrane. The protein is Maltose/maltodextrin transport system permease protein MalF of Escherichia coli (strain K12).